We begin with the raw amino-acid sequence, 185 residues long: Prorelaxin H1 (185 aa).

The first 22 residues, 1 to 22 (MPRLFLFHLLEFCLLLNQFSRA), serve as a signal peptide directing secretion. 3 disulfide bridges follow: Cys35–Cys172, Cys47–Cys185, and Cys171–Cys176. Positions 56 to 158 (SLSQEDAPQT…KYLGLDTHSQ (103 aa)) are cleaved as a propeptide — connecting peptide.

This sequence belongs to the insulin family. As to quaternary structure, heterodimer of a B chain and an A chain linked by two disulfide bonds. Prostate. Not expressed in placenta, decidua or ovary.

The protein localises to the secreted. Its function is as follows. Relaxin is an ovarian hormone that acts with estrogen to produce dilatation of the birth canal in many mammals. May be involved in remodeling of connective tissues during pregnancy, promoting growth of pubic ligaments and ripening of the cervix. This Homo sapiens (Human) protein is Prorelaxin H1 (RLN1).